The primary structure comprises 244 residues: tRNA pseudouridine synthase A (244 aa).

The active-site Nucleophile is aspartate 52. Substrate is bound at residue tyrosine 110.

This sequence belongs to the tRNA pseudouridine synthase TruA family. Homodimer.

The catalysed reaction is uridine(38/39/40) in tRNA = pseudouridine(38/39/40) in tRNA. In terms of biological role, formation of pseudouridine at positions 38, 39 and 40 in the anticodon stem and loop of transfer RNAs. This Finegoldia magna (strain ATCC 29328 / DSM 20472 / WAL 2508) (Peptostreptococcus magnus) protein is tRNA pseudouridine synthase A.